A 174-amino-acid chain; its full sequence is MASTTFSSAFSILSLPSSSPSPPPSPPRTLPVANRRRRAAAVASTATESPKVLELGDAIAGLTLEEARNLVDHLQERLCVSAASFPPAAAGLRAAAVEEAPVEQTEFDVVIEEVPSSARIATIKIVRALTNLALKEAKDLIEGLPKKLKEAVSKDEAEEAKKQLEGVGAKVSIA.

The transit peptide at 1-45 directs the protein to the chloroplast; sequence MASTTFSSAFSILSLPSSSPSPPPSPPRTLPVANRRRRAAAVAST. Residues 1-46 are disordered; the sequence is MASTTFSSAFSILSLPSSSPSPPPSPPRTLPVANRRRRAAAVASTA. A compositionally biased stretch (low complexity) spans 7-18; that stretch reads SSAFSILSLPSS. Residues 19–29 are compositionally biased toward pro residues; it reads SPSPPPSPPRT.

It belongs to the bacterial ribosomal protein bL12 family.

The protein resides in the plastid. The protein localises to the chloroplast. The chain is Large ribosomal subunit protein bL12cz (RPL12-1) from Secale cereale (Rye).